The sequence spans 123 residues: MAENRRMKKVNAMLREAIAKVILKDVKHPKISNRWITITRVSLSRDLQSACVYVSIMPHENSQEETLAALKASAGFIAFQASKDLVLKYFPDLNFYLEDIFSPQDHIESLLLKIAEQDKKTNP.

It belongs to the RbfA family. In terms of assembly, monomer. Binds 30S ribosomal subunits, but not 50S ribosomal subunits or 70S ribosomes.

The protein localises to the cytoplasm. One of several proteins that assist in the late maturation steps of the functional core of the 30S ribosomal subunit. Associates with free 30S ribosomal subunits (but not with 30S subunits that are part of 70S ribosomes or polysomes). Required for efficient processing of 16S rRNA. May interact with the 5'-terminal helix region of 16S rRNA. The protein is Ribosome-binding factor A of Chlamydia trachomatis serovar A (strain ATCC VR-571B / DSM 19440 / HAR-13).